The chain runs to 54 residues: Protein hunchback (54 aa).

C2H2-type zinc fingers lie at residues 1-3, 9-31, and 37-54; these read RKH, FQCD…RKFH, and YRCA…SFKL.

Belongs to the hunchback C2H2-type zinc-finger protein family.

The protein resides in the nucleus. Its function is as follows. Gap class segmentation protein that controls development of head structures. This chain is Protein hunchback (hb), found in Calliphora vicina (Blue blowfly).